Consider the following 312-residue polypeptide: Methionyl-tRNA formyltransferase (312 aa).

A (6S)-5,6,7,8-tetrahydrofolate-binding site is contributed by 109-112 (SLLP).

It belongs to the Fmt family.

It catalyses the reaction L-methionyl-tRNA(fMet) + (6R)-10-formyltetrahydrofolate = N-formyl-L-methionyl-tRNA(fMet) + (6S)-5,6,7,8-tetrahydrofolate + H(+). Attaches a formyl group to the free amino group of methionyl-tRNA(fMet). The formyl group appears to play a dual role in the initiator identity of N-formylmethionyl-tRNA by promoting its recognition by IF2 and preventing the misappropriation of this tRNA by the elongation apparatus. The sequence is that of Methionyl-tRNA formyltransferase from Geotalea daltonii (strain DSM 22248 / JCM 15807 / FRC-32) (Geobacter daltonii).